The sequence spans 134 residues: Cytochrome b (134 aa).

The next 3 membrane-spanning stretches (helical) occupy residues 33-53, 77-98, and 113-133; these read FGSL…FLAI, WLLR…YLHV, and WNIG…GYVL. Heme b-binding residues include histidine 83 and histidine 97.

It belongs to the cytochrome b family. The cytochrome bc1 complex contains 11 subunits: 3 respiratory subunits (MT-CYB, CYC1 and UQCRFS1), 2 core proteins (UQCRC1 and UQCRC2) and 6 low-molecular weight proteins (UQCRH/QCR6, UQCRB/QCR7, UQCRQ/QCR8, UQCR10/QCR9, UQCR11/QCR10 and a cleavage product of UQCRFS1). This cytochrome bc1 complex then forms a dimer. The cofactor is heme b.

The protein localises to the mitochondrion inner membrane. Functionally, component of the ubiquinol-cytochrome c reductase complex (complex III or cytochrome b-c1 complex) that is part of the mitochondrial respiratory chain. The b-c1 complex mediates electron transfer from ubiquinol to cytochrome c. Contributes to the generation of a proton gradient across the mitochondrial membrane that is then used for ATP synthesis. The protein is Cytochrome b (MT-CYB) of Platyrrhinus helleri (Heller's broad-nosed bat).